A 78-amino-acid chain; its full sequence is uncharacterized protein (78 aa).

The interval 1–28 (MQANHSVSYLYESSTSKRSNGLFSQTQK) is disordered.

This is an uncharacterized protein from Saccharomyces cerevisiae (strain ATCC 204508 / S288c) (Baker's yeast).